A 558-amino-acid chain; its full sequence is NAD(P)H-quinone oxidoreductase chain 4 (558 aa).

14 helical membrane-spanning segments follow: residues 25 to 45 (FPWLSLSILFPIFGSLVVPFI), 56 to 76 (WYALGIALVTFLITVGAYLKG), 111 to 131 (LILLTSFITALAVLAAWPVSF), 133 to 153 (PKLFFFLILAMDGGQIAVFAV), 157 to 177 (LLFFLAWELELLPVYLLLAIW), 189 to 209 (FIIYTAGSSLFILLAALAMGF), 230 to 250 (GFQLLCYGGLLIAFGVKLPVV), 264 to 284 (TAPVHMLLAGILLKMGGYALL), 298 to 318 (FAPLLIVLGVVNIIYAALTSF), 327 to 347 (IAYSSISHMGFVLIGIGSFSS), 353 to 373 (AMLQMVSHGLIGASLFFLVGA), 395 to 417 (IMFALWTTCSLASLALPGMSGFV), 438 to 458 (IVIAGLAAIGVILTPIYLLSM), and 485 to 505 (IYVIGSLLVPIIGIGLYPRIM).

Belongs to the complex I subunit 4 family.

The protein resides in the cellular thylakoid membrane. It carries out the reaction a plastoquinone + NADH + (n+1) H(+)(in) = a plastoquinol + NAD(+) + n H(+)(out). The catalysed reaction is a plastoquinone + NADPH + (n+1) H(+)(in) = a plastoquinol + NADP(+) + n H(+)(out). NDH-1 shuttles electrons from NAD(P)H, via FMN and iron-sulfur (Fe-S) centers, to quinones in the respiratory chain. The immediate electron acceptor for the enzyme in this species is believed to be plastoquinone. Couples the redox reaction to proton translocation (for every two electrons transferred, four hydrogen ions are translocated across the cytoplasmic membrane), and thus conserves the redox energy in a proton gradient. In Prochlorococcus marinus (strain MIT 9211), this protein is NAD(P)H-quinone oxidoreductase chain 4.